The following is a 207-amino-acid chain: MPEWALYALAAVAGYLSGSIPFGLVIVKAAGLGDIREIGSKSIGATNVLRTGRKDLALATFLLDSLKAGLVALAFTLLAGREVGFVAGFAAFIGHCYPVWLGFKGGKGIATYAGLLAFVSPLHGLVVAAPVWLGLFALTRISSLAALTAAVAVPPGAWLMGERNSLILAGLALLSVFVFWTHRENIGRLLKGTEPRFGAKKKDAPEA.

A run of 6 helical transmembrane segments spans residues 7-27 (YALA…LVIV), 58-78 (LATF…FTLL), 83-103 (VGFV…WLGF), 116-136 (LAFV…LGLF), 141-161 (ISSL…WLMG), and 166-186 (LILA…RENI).

Belongs to the PlsY family. As to quaternary structure, probably interacts with PlsX.

It is found in the cell inner membrane. It catalyses the reaction an acyl phosphate + sn-glycerol 3-phosphate = a 1-acyl-sn-glycero-3-phosphate + phosphate. It participates in lipid metabolism; phospholipid metabolism. Functionally, catalyzes the transfer of an acyl group from acyl-phosphate (acyl-PO(4)) to glycerol-3-phosphate (G3P) to form lysophosphatidic acid (LPA). This enzyme utilizes acyl-phosphate as fatty acyl donor, but not acyl-CoA or acyl-ACP. This is Glycerol-3-phosphate acyltransferase from Hyphomonas neptunium (strain ATCC 15444).